The sequence spans 352 residues: UDP-N-acetylglucosamine--N-acetylmuramyl-(pentapeptide) pyrophosphoryl-undecaprenol N-acetylglucosamine transferase (352 aa).

Residues serine 195 and glutamine 287 each coordinate UDP-N-acetyl-alpha-D-glucosamine.

Belongs to the glycosyltransferase 28 family. MurG subfamily.

It localises to the cell membrane. The enzyme catalyses Mur2Ac(oyl-L-Ala-gamma-D-Glu-L-Lys-D-Ala-D-Ala)-di-trans,octa-cis-undecaprenyl diphosphate + UDP-N-acetyl-alpha-D-glucosamine = beta-D-GlcNAc-(1-&gt;4)-Mur2Ac(oyl-L-Ala-gamma-D-Glu-L-Lys-D-Ala-D-Ala)-di-trans,octa-cis-undecaprenyl diphosphate + UDP + H(+). It functions in the pathway cell wall biogenesis; peptidoglycan biosynthesis. Its function is as follows. Cell wall formation. Catalyzes the transfer of a GlcNAc subunit on undecaprenyl-pyrophosphoryl-MurNAc-pentapeptide (lipid intermediate I) to form undecaprenyl-pyrophosphoryl-MurNAc-(pentapeptide)GlcNAc (lipid intermediate II). The protein is UDP-N-acetylglucosamine--N-acetylmuramyl-(pentapeptide) pyrophosphoryl-undecaprenol N-acetylglucosamine transferase of Streptococcus pneumoniae (strain ATCC BAA-255 / R6).